We begin with the raw amino-acid sequence, 667 residues long: Gamma-tubulin complex component 4 (667 aa).

The tract at residues Asp-424 to Pro-446 is disordered.

This sequence belongs to the TUBGCP family. Component of the gamma-tubulin ring complex (gTuRC) consisting of TUBGCP2, TUBGCP3, TUBGCP4, TUBGCP5 and TUBGCP6 and gamma-tubulin TUBG1 or TUBG2. TUBGCP2, TUBGCP3, TUBGCP4, TUBGCP5 and TUBGCP6 assemble in a 5:5:2:1:1 stoichiometry; each is associated with a gamma-tubulin, thereby arranging 14 gamma-tubulins in a helical manner. Gamma-tubulin at the first position is blocked by TUBGCP3 at the last position, allowing 13 protafilaments to grow into a microtubule. The gTuRC (via TUBGCP3 and TUBGCP6) interacts with ACTB and MZT1; the interactions form a luminal bridge that stabilizes the initial structure during complex assembly. The gTuRC (via TUBGCP2) interacts with MZT2A/MZT2B and CDK5RAP2 (via CM1 motif); the interactions play a role in gTuRC activation. Interacts with NINL. Interacts with ATF5; the ATF5:PCNT:polyglutamylated tubulin (PGT) tripartite unites the mother centriole and the pericentriolar material (PCM) in the centrosome.

Its subcellular location is the cytoplasm. It is found in the cytoskeleton. The protein resides in the microtubule organizing center. It localises to the centrosome. In terms of biological role, component of the gamma-tubulin ring complex (gTuRC) which mediates microtubule nucleation. The gTuRC regulates the minus-end nucleation of alpha-beta tubulin heterodimers that grow into microtubule protafilaments, a critical step in centrosome duplication and spindle formation. In Mus musculus (Mouse), this protein is Gamma-tubulin complex component 4 (Tubgcp4).